Reading from the N-terminus, the 299-residue chain is Methionyl-tRNA formyltransferase (299 aa).

109 to 112 (SLLP) is a binding site for (6S)-5,6,7,8-tetrahydrofolate.

The protein belongs to the Fmt family.

The catalysed reaction is L-methionyl-tRNA(fMet) + (6R)-10-formyltetrahydrofolate = N-formyl-L-methionyl-tRNA(fMet) + (6S)-5,6,7,8-tetrahydrofolate + H(+). In terms of biological role, attaches a formyl group to the free amino group of methionyl-tRNA(fMet). The formyl group appears to play a dual role in the initiator identity of N-formylmethionyl-tRNA by promoting its recognition by IF2 and preventing the misappropriation of this tRNA by the elongation apparatus. The sequence is that of Methionyl-tRNA formyltransferase from Dinoroseobacter shibae (strain DSM 16493 / NCIMB 14021 / DFL 12).